We begin with the raw amino-acid sequence, 64 residues long: LTCLNCPEMFCGKFQICRNGEKICFKKLHQRRPLSRYIRGCADTCPVGYPKEMIECCSTDKCNR.

5 disulfides stabilise this stretch: Cys3/Cys24, Cys6/Cys11, Cys17/Cys41, Cys45/Cys56, and Cys57/Cys62.

This sequence belongs to the three-finger toxin family. Ancestral subfamily. Orphan group II sub-subfamily. Expressed by the venom gland.

The protein localises to the secreted. Functionally, binds with low affinity to muscular (alpha-1-beta-1-delta-epsilon/CHRNA1-CHRNB1-CHRND-CHRNE) and very low affinity to neuronal (alpha-7/CHRNA7) nicotinic acetylcholine receptor (nAChR). This chain is Weak toxin CM-9a, found in Naja kaouthia (Monocled cobra).